The following is a 1380-amino-acid chain: DNA-directed RNA polymerase subunit beta (1380 aa).

This sequence belongs to the RNA polymerase beta chain family. In terms of assembly, the RNAP catalytic core consists of 2 alpha, 1 beta, 1 beta' and 1 omega subunit. When a sigma factor is associated with the core the holoenzyme is formed, which can initiate transcription.

It catalyses the reaction RNA(n) + a ribonucleoside 5'-triphosphate = RNA(n+1) + diphosphate. DNA-dependent RNA polymerase catalyzes the transcription of DNA into RNA using the four ribonucleoside triphosphates as substrates. The polypeptide is DNA-directed RNA polymerase subunit beta (Sinorhizobium fredii (strain NBRC 101917 / NGR234)).